Here is a 271-residue protein sequence, read N- to C-terminus: Calretinin (271 aa).

EF-hand domains follow at residues 16–51, 63–98, 107–142, 151–186, 195–230, and 235–270; these read LTAS…LEKA, NFGE…EENF, GSSA…LLKK, KLQE…QENF, LTSE…LYEK, and MNIQ…SEPP. Positions 29, 31, 33, 35, 40, 76, 78, 80, 82, 87, 120, 122, 124, 126, 131, 164, 166, 168, 170, 175, 208, 210, 212, 214, and 219 each coordinate Ca(2+). Residue Tyr214 is modified to Phosphotyrosine.

This sequence belongs to the calbindin family. As to expression, widely expressed in central nervous system. Expressed in type I unipolar brush cells of the cerebellum (at protein level).

It localises to the synapse. Its subcellular location is the cell projection. It is found in the dendrite. In terms of biological role, calcium-binding protein involved in calcium homeostasis and signal transduction. It plays a critical role in buffering intracellular calcium levels and modulating calcium-dependent signaling pathways. Predominantly expressed in specific neuronal populations, influences synaptic plasticity and neuronal excitability, contributing to learning and memory. During embryonic development, it facilitates neuronal differentiation and maturation. The protein is Calretinin (Calb2) of Mus musculus (Mouse).